The chain runs to 423 residues: COP9 signalosome complex subunit 3 (423 aa).

The 169-residue stretch at 197-365 folds into the PCI domain; it reads NFERALYFYE…GMVCFHDNPE (169 aa). The interval 403–423 is disordered; that stretch reads FVQKSMGSQDDDSGSKPSSYS.

The protein belongs to the CSN3 family. Component of the CSN complex, probably composed of cops1, cops2, cops3, cops4, cops5, cops6, cops7, cops8 and cops9.

The protein resides in the cytoplasm. The protein localises to the nucleus. Component of the COP9 signalosome complex (CSN), a complex involved in various cellular and developmental processes. The CSN complex is an essential regulator of the ubiquitin (Ubl) conjugation pathway by mediating the deneddylation of the cullin subunits of E3 ligase complexes, leading to modify the Ubl ligase activity. This is COP9 signalosome complex subunit 3 (cops3) from Xenopus tropicalis (Western clawed frog).